Reading from the N-terminus, the 352-residue chain is N-acetyl-gamma-glutamyl-phosphate reductase (352 aa).

C155 is a catalytic residue.

It belongs to the NAGSA dehydrogenase family. Type 1 subfamily.

The protein resides in the cytoplasm. The enzyme catalyses N-acetyl-L-glutamate 5-semialdehyde + phosphate + NADP(+) = N-acetyl-L-glutamyl 5-phosphate + NADPH + H(+). The protein operates within amino-acid biosynthesis; L-arginine biosynthesis; N(2)-acetyl-L-ornithine from L-glutamate: step 3/4. In terms of biological role, catalyzes the NADPH-dependent reduction of N-acetyl-5-glutamyl phosphate to yield N-acetyl-L-glutamate 5-semialdehyde. The chain is N-acetyl-gamma-glutamyl-phosphate reductase from Rippkaea orientalis (strain PCC 8801 / RF-1) (Cyanothece sp. (strain PCC 8801)).